Consider the following 291-residue polypeptide: Glycine--tRNA ligase alpha subunit (291 aa).

The protein belongs to the class-II aminoacyl-tRNA synthetase family. Tetramer of two alpha and two beta subunits.

It localises to the cytoplasm. It carries out the reaction tRNA(Gly) + glycine + ATP = glycyl-tRNA(Gly) + AMP + diphosphate. The sequence is that of Glycine--tRNA ligase alpha subunit from Coprothermobacter proteolyticus (strain ATCC 35245 / DSM 5265 / OCM 4 / BT).